Here is a 570-residue protein sequence, read N- to C-terminus: Sulfite reductase [NADPH] hemoprotein beta-component (570 aa).

[4Fe-4S] cluster-binding residues include Cys434, Cys440, Cys479, and Cys483. Cys483 lines the siroheme pocket.

It belongs to the nitrite and sulfite reductase 4Fe-4S domain family. In terms of assembly, alpha(8)-beta(8). The alpha component is a flavoprotein, the beta component is a hemoprotein. Requires siroheme as cofactor. The cofactor is [4Fe-4S] cluster.

The catalysed reaction is hydrogen sulfide + 3 NADP(+) + 3 H2O = sulfite + 3 NADPH + 4 H(+). Its pathway is sulfur metabolism; hydrogen sulfide biosynthesis; hydrogen sulfide from sulfite (NADPH route): step 1/1. Functionally, component of the sulfite reductase complex that catalyzes the 6-electron reduction of sulfite to sulfide. This is one of several activities required for the biosynthesis of L-cysteine from sulfate. This chain is Sulfite reductase [NADPH] hemoprotein beta-component, found in Salmonella dublin (strain CT_02021853).